We begin with the raw amino-acid sequence, 635 residues long: Probable extracellular metalloproteinase 1 (635 aa).

A signal peptide spans 1 to 19 (MHGLLLAAGLLSLPLHVLA). The propeptide occupies 20-246 (HPQPSTSTSL…VHNVVDYVAH (227 aa)). The N-linked (GlcNAc...) asparagine glycan is linked to Asn-287. His-430 provides a ligand contact to Zn(2+). Glu-431 is an active-site residue. His-434 contacts Zn(2+). 3 N-linked (GlcNAc...) asparagine glycosylation sites follow: Asn-475, Asn-594, and Asn-623.

It belongs to the peptidase M36 family. Zn(2+) is required as a cofactor.

The protein resides in the secreted. Secreted metalloproteinase probably acting as a virulence factor. The chain is Probable extracellular metalloproteinase 1 (MEP1) from Trichophyton verrucosum (strain HKI 0517).